A 442-amino-acid chain; its full sequence is Septin-8 (442 aa).

Ala-2 is subject to N-acetylalanine. Residue Ser-10 is modified to Phosphoserine. The Septin-type G domain maps to 41–307; sequence QGFSFNILCV…ELYRRCKLEE (267 aa). The interval 51-58 is G1 motif; that stretch reads GETGIGKS. GTP is bound by residues 51–58, Gly-106, 187–195, Gly-241, and Arg-256; these read GETGIGKS and KADTISKSE. The segment at 103–106 is G3 motif; sequence DAVG. The segment at 186 to 189 is G4 motif; it reads AKAD. Residues 322 to 410 adopt a coiled-coil conformation; that stretch reads LQETYEAKRK…RKAAVEALQS (89 aa). A compositionally biased stretch (basic and acidic residues) spans 377-391; that stretch reads HQEEKRKVEEKRREL. A disordered region spans residues 377–442; sequence HQEEKRKVEE…WSSIYSVTIP (66 aa). 2 stretches are compositionally biased toward polar residues: residues 408–420 and 432–442; these read LQSQ…SQQP and GWSSIYSVTIP.

It belongs to the TRAFAC class TrmE-Era-EngA-EngB-Septin-like GTPase superfamily. Septin GTPase family. In terms of assembly, septins polymerize into heterooligomeric protein complexes that form filaments, and can associate with cellular membranes, actin filaments and microtubules. GTPase activity is required for filament formation. Interacts with CDK14, SEPTIN4, SEPTIN5 and SEPTIN7. Interacts with VAMP2; the interaction inhibits interaction of VAMP2 with SYP. Interacts with STX1A.

Its subcellular location is the cytoplasm. It is found in the cytoskeleton. The protein resides in the synapse. It localises to the cell projection. The protein localises to the axon. Its subcellular location is the cytoplasmic vesicle. It is found in the secretory vesicle. The protein resides in the synaptic vesicle membrane. It localises to the presynapse. In terms of biological role, filament-forming cytoskeletal GTPase. May play a role in platelet secretion. Seems to participate in the process of SNARE complex formation in synaptic vesicles. The polypeptide is Septin-8 (Callithrix jacchus (White-tufted-ear marmoset)).